We begin with the raw amino-acid sequence, 233 residues long: 2-C-methyl-D-erythritol 4-phosphate cytidylyltransferase (233 aa).

The protein belongs to the IspD/TarI cytidylyltransferase family. IspD subfamily.

The enzyme catalyses 2-C-methyl-D-erythritol 4-phosphate + CTP + H(+) = 4-CDP-2-C-methyl-D-erythritol + diphosphate. Its pathway is isoprenoid biosynthesis; isopentenyl diphosphate biosynthesis via DXP pathway; isopentenyl diphosphate from 1-deoxy-D-xylulose 5-phosphate: step 2/6. Catalyzes the formation of 4-diphosphocytidyl-2-C-methyl-D-erythritol from CTP and 2-C-methyl-D-erythritol 4-phosphate (MEP). This is 2-C-methyl-D-erythritol 4-phosphate cytidylyltransferase from Aromatoleum aromaticum (strain DSM 19018 / LMG 30748 / EbN1) (Azoarcus sp. (strain EbN1)).